Reading from the N-terminus, the 194-residue chain is Holliday junction branch migration complex subunit RuvA (194 aa).

A domain I region spans residues 1 to 64 (MIARLSGILV…EDAQLLYGFG (64 aa)). The segment at 65 to 141 (SDQERATFRQ…FAIDGGTALA (77 aa)) is domain II. The interval 141-144 (AGSN) is flexible linker. The segment at 145-194 (PAKSASSDVLNALLALGYNEREALAAVKQLPADIAVAEGIKLSLKSLSKT) is domain III.

It belongs to the RuvA family. Homotetramer. Forms an RuvA(8)-RuvB(12)-Holliday junction (HJ) complex. HJ DNA is sandwiched between 2 RuvA tetramers; dsDNA enters through RuvA and exits via RuvB. An RuvB hexamer assembles on each DNA strand where it exits the tetramer. Each RuvB hexamer is contacted by two RuvA subunits (via domain III) on 2 adjacent RuvB subunits; this complex drives branch migration. In the full resolvosome a probable DNA-RuvA(4)-RuvB(12)-RuvC(2) complex forms which resolves the HJ.

The protein resides in the cytoplasm. The RuvA-RuvB-RuvC complex processes Holliday junction (HJ) DNA during genetic recombination and DNA repair, while the RuvA-RuvB complex plays an important role in the rescue of blocked DNA replication forks via replication fork reversal (RFR). RuvA specifically binds to HJ cruciform DNA, conferring on it an open structure. The RuvB hexamer acts as an ATP-dependent pump, pulling dsDNA into and through the RuvAB complex. HJ branch migration allows RuvC to scan DNA until it finds its consensus sequence, where it cleaves and resolves the cruciform DNA. This chain is Holliday junction branch migration complex subunit RuvA, found in Methylobacillus flagellatus (strain ATCC 51484 / DSM 6875 / VKM B-1610 / KT).